A 155-amino-acid polypeptide reads, in one-letter code: Ribosomal RNA large subunit methyltransferase H (155 aa).

S-adenosyl-L-methionine-binding positions include Leu-72, Gly-103, and 122-127 (LGRMVW).

This sequence belongs to the RNA methyltransferase RlmH family. In terms of assembly, homodimer.

It localises to the cytoplasm. The enzyme catalyses pseudouridine(1915) in 23S rRNA + S-adenosyl-L-methionine = N(3)-methylpseudouridine(1915) in 23S rRNA + S-adenosyl-L-homocysteine + H(+). Its function is as follows. Specifically methylates the pseudouridine at position 1915 (m3Psi1915) in 23S rRNA. The sequence is that of Ribosomal RNA large subunit methyltransferase H from Cereibacter sphaeroides (strain KD131 / KCTC 12085) (Rhodobacter sphaeroides).